The following is a 113-amino-acid chain: MRCKTLTAAAAVLLMLTAGCSTLERVVYRPDINQGNYLTANDVSKIRVGMTQQQVAYALGTPLMSDPFGTNTWFYVFRQQPGHEGVTQQTLTLTFNSSGVLTNIDNKPALSGN.

Positions 1–19 are cleaved as a signal peptide; that stretch reads MRCKTLTAAAAVLLMLTAG. The N-palmitoyl cysteine moiety is linked to residue C20. A lipid anchor (S-diacylglycerol cysteine) is attached at C20.

It belongs to the BamE family. As to quaternary structure, part of the Bam complex, which is composed of the outer membrane protein BamA, and four lipoproteins BamB, BamC, BamD and BamE.

The protein localises to the cell outer membrane. Its function is as follows. Part of the outer membrane protein assembly complex, which is involved in assembly and insertion of beta-barrel proteins into the outer membrane. This is Outer membrane protein assembly factor BamE from Escherichia coli O6:H1 (strain CFT073 / ATCC 700928 / UPEC).